We begin with the raw amino-acid sequence, 872 residues long: Protein SEY1 (872 aa).

The Cytoplasmic segment spans residues 1-749 (MVANGHFAGV…KRSAIGGITQ (749 aa)). The region spanning 49–307 (GFNYHLISVF…IPADGFAVYA (259 aa)) is the GB1/RHD3-type G domain. A GTP-binding site is contributed by 59–66 (GSQSTGKS). Residues 482–504 (SNYQQELSLYQKDLENIGGQLRR) are a coiled coil. Residues 676 to 704 (LDKWIGHTPSSATPADEEDLTPIGGVDED) form a disordered region. Positions 690 to 704 (ADEEDLTPIGGVDED) are enriched in acidic residues. Residues 750–770 (VPLYFYGLLLALGWNEIVAVL) form a helical membrane-spanning segment. At 771 to 773 (RNP) the chain is on the lumenal side. A helical transmembrane segment spans residues 774-794 (AYFLLLFVCAVTAYVTYQLNL). Residues 795–872 (WGPIIKMTEA…IDDADDDDDF (78 aa)) are Cytoplasmic-facing. Residues 849–872 (NRKSAGGFQNNRSHIDDADDDDDF) are disordered.

Belongs to the TRAFAC class dynamin-like GTPase superfamily. GB1/RHD3 GTPase family. RHD3 subfamily.

It is found in the endoplasmic reticulum membrane. Functionally, cooperates with the reticulon proteins and tubule-shaping DP1 family proteins to generate and maintain the structure of the tubular endoplasmic reticulum network. Has GTPase activity, which is required for its function in ER organization. The chain is Protein SEY1 from Paracoccidioides brasiliensis (strain Pb18).